We begin with the raw amino-acid sequence, 214 residues long: MSQITIALTKGRIEKDTVKLLTQAGFDMSFMADKGRSLIFESPDSRFRFLLVKGPDVTTYVRHGVADLGIVGKDILFEHPTGYLELLDLNFGLCKFSLASVPSYDPHDHKRKRIATKYPTVATDYFNQKGEDVEIISIQGSVEISPVLGLADAIVDIVETGHTLSANGLLVFEDICRVSARLIANQASLKNNPDIMPFVAKIESLVGRREVAFK.

The protein belongs to the ATP phosphoribosyltransferase family. Short subfamily. As to quaternary structure, heteromultimer composed of HisG and HisZ subunits.

It localises to the cytoplasm. It carries out the reaction 1-(5-phospho-beta-D-ribosyl)-ATP + diphosphate = 5-phospho-alpha-D-ribose 1-diphosphate + ATP. Its pathway is amino-acid biosynthesis; L-histidine biosynthesis; L-histidine from 5-phospho-alpha-D-ribose 1-diphosphate: step 1/9. In terms of biological role, catalyzes the condensation of ATP and 5-phosphoribose 1-diphosphate to form N'-(5'-phosphoribosyl)-ATP (PR-ATP). Has a crucial role in the pathway because the rate of histidine biosynthesis seems to be controlled primarily by regulation of HisG enzymatic activity. The sequence is that of ATP phosphoribosyltransferase from Streptococcus sanguinis (strain SK36).